A 427-amino-acid chain; its full sequence is Serine hydroxymethyltransferase (427 aa).

Residues Leu122 and 126–128 each bind (6S)-5,6,7,8-tetrahydrofolate; that span reads GHL. Lys231 is subject to N6-(pyridoxal phosphate)lysine. Residue 355 to 357 coordinates (6S)-5,6,7,8-tetrahydrofolate; the sequence is SPF.

The protein belongs to the SHMT family. Homodimer. The cofactor is pyridoxal 5'-phosphate.

It localises to the cytoplasm. It catalyses the reaction (6R)-5,10-methylene-5,6,7,8-tetrahydrofolate + glycine + H2O = (6S)-5,6,7,8-tetrahydrofolate + L-serine. The protein operates within one-carbon metabolism; tetrahydrofolate interconversion. Its pathway is amino-acid biosynthesis; glycine biosynthesis; glycine from L-serine: step 1/1. In terms of biological role, catalyzes the reversible interconversion of serine and glycine with tetrahydrofolate (THF) serving as the one-carbon carrier. This reaction serves as the major source of one-carbon groups required for the biosynthesis of purines, thymidylate, methionine, and other important biomolecules. Also exhibits THF-independent aldolase activity toward beta-hydroxyamino acids, producing glycine and aldehydes, via a retro-aldol mechanism. The polypeptide is Serine hydroxymethyltransferase (Nostoc punctiforme (strain ATCC 29133 / PCC 73102)).